Consider the following 371-residue polypeptide: Anhydro-N-acetylmuramic acid kinase (371 aa).

12–20 lines the ATP pocket; sequence GTVLDGNID.

Belongs to the anhydro-N-acetylmuramic acid kinase family.

It carries out the reaction 1,6-anhydro-N-acetyl-beta-muramate + ATP + H2O = N-acetyl-D-muramate 6-phosphate + ADP + H(+). Its pathway is amino-sugar metabolism; 1,6-anhydro-N-acetylmuramate degradation. The protein operates within cell wall biogenesis; peptidoglycan recycling. Catalyzes the specific phosphorylation of 1,6-anhydro-N-acetylmuramic acid (anhMurNAc) with the simultaneous cleavage of the 1,6-anhydro ring, generating MurNAc-6-P. Is required for the utilization of anhMurNAc either imported from the medium or derived from its own cell wall murein, and thus plays a role in cell wall recycling. This Brucella anthropi (strain ATCC 49188 / DSM 6882 / CCUG 24695 / JCM 21032 / LMG 3331 / NBRC 15819 / NCTC 12168 / Alc 37) (Ochrobactrum anthropi) protein is Anhydro-N-acetylmuramic acid kinase.